Reading from the N-terminus, the 602-residue chain is MASAHIEHKLSLLPDLPGSYQMKDINGKIIYVGKAKNLKNRVRSYFKSSHDGKVAAMVSQVADFDFIVTSTDKEAFLLEITLIQKYQPYYNIKLKKGTGYPYIKITHERDPKIEITGTIRKDGGYYFGPYPNVYAAQETMHFIQKVYPLRRCNGYQGRPCLYYHMGQCLGACFRTVPEKEYTDQIERIKRFLNGNVGKAKASLTAKMERAAKNLQFERAAEIRDQLHYIEQTLEKQKIISHDNTTRDLFNFYMDKGWISIQVFFIRQARLMKRESRLFPVVNTAKEEFESFILQFYSRRNNVKPREVLVPAGLDNKVLADILEIPVRTPQRGEKRDLMALAAKNSQIKLEDKFRLMELDNRTTIGAMKELMAALNLPMGHVAEAFDHSHIQGADPVSAMVQFVDGQPAKNNYRKYKLDADKTHNGADEAANTREVIRRRYTRLLKERAPLPDLILMDGGEIEMNAAKDVLENELNLDIPVAGMVKNNKHKTAALLFGNADQLINLDPKSQGFYLLERIQDEVHRFAITFHRQLHAKNSLASRLEGIKGVGPKTRLKLLRKFKTINKIKEAPLEDIQELGISKKVAQALKLSLTAEPTPARRV.

Residues 15 to 92 (DLPGSYQMKD…IQKYQPYYNI (78 aa)) enclose the GIY-YIG domain. Residues 197–232 (GKAKASLTAKMERAAKNLQFERAAEIRDQLHYIEQT) enclose the UVR domain.

It belongs to the UvrC family. In terms of assembly, interacts with UvrB in an incision complex.

It is found in the cytoplasm. The UvrABC repair system catalyzes the recognition and processing of DNA lesions. UvrC both incises the 5' and 3' sides of the lesion. The N-terminal half is responsible for the 3' incision and the C-terminal half is responsible for the 5' incision. The polypeptide is UvrABC system protein C (Lacticaseibacillus paracasei (strain ATCC 334 / BCRC 17002 / CCUG 31169 / CIP 107868 / KCTC 3260 / NRRL B-441) (Lactobacillus paracasei)).